Reading from the N-terminus, the 290-residue chain is Large ribosomal subunit protein uL3 (290 aa).

Q152 is modified (N5-methylglutamine). The disordered stretch occupies residues 250-290 (ARLAEEQAAAEAESLAQAEAEIAAEGSDAAPEGDADKKDGE). A compositionally biased stretch (low complexity) spans 255–274 (EQAAAEAESLAQAEAEIAAE).

It belongs to the universal ribosomal protein uL3 family. As to quaternary structure, part of the 50S ribosomal subunit. Forms a cluster with proteins L14 and L19. Methylated by PrmB.

In terms of biological role, one of the primary rRNA binding proteins, it binds directly near the 3'-end of the 23S rRNA, where it nucleates assembly of the 50S subunit. The sequence is that of Large ribosomal subunit protein uL3 from Jannaschia sp. (strain CCS1).